Consider the following 142-residue polypeptide: Non-specific lipid transfer protein GPI-anchored 34 (142 aa).

The N-terminal stretch at 1 to 22 is a signal peptide; sequence MAVAVTAVLFLAVVIAPQWTET. Residues 21 to 43 are disordered; the sequence is ETKKPPRPSDTSDTSGTSGRDRR. Positions 29-38 are enriched in low complexity; the sequence is SDTSDTSGTS. Disulfide bonds link C46/C85, C57/C69, C70/C106, and C83/C114. The GPI-anchor amidated asparagine moiety is linked to residue N120. A propeptide spans 121-142 (removed in mature form); sequence GGATKKIVASMGLFGVVASLFF.

It belongs to the plant LTP family.

The protein localises to the cell membrane. Probable lipid transfer protein. This is Non-specific lipid transfer protein GPI-anchored 34 from Arabidopsis thaliana (Mouse-ear cress).